Reading from the N-terminus, the 213-residue chain is Orotate phosphoribosyltransferase (213 aa).

Lys26 contributes to the 5-phospho-alpha-D-ribose 1-diphosphate binding site. Residue 34 to 35 coordinates orotate; the sequence is FF. 5-phospho-alpha-D-ribose 1-diphosphate-binding positions include 72 to 73, Arg99, Lys100, Lys103, His105, and 124 to 132; these read YK and DDVITAGTA. 2 residues coordinate orotate: Thr128 and Arg156.

This sequence belongs to the purine/pyrimidine phosphoribosyltransferase family. PyrE subfamily. Homodimer. Mg(2+) is required as a cofactor.

The enzyme catalyses orotidine 5'-phosphate + diphosphate = orotate + 5-phospho-alpha-D-ribose 1-diphosphate. It participates in pyrimidine metabolism; UMP biosynthesis via de novo pathway; UMP from orotate: step 1/2. Functionally, catalyzes the transfer of a ribosyl phosphate group from 5-phosphoribose 1-diphosphate to orotate, leading to the formation of orotidine monophosphate (OMP). In Klebsiella pneumoniae (strain 342), this protein is Orotate phosphoribosyltransferase.